The chain runs to 223 residues: Phosphoribosylformylglycinamidine synthase subunit PurQ (223 aa).

Residues 2–223 (KIAVVVFPGS…KSLLKAGVQA (222 aa)) enclose the Glutamine amidotransferase type-1 domain. Cysteine 86 (nucleophile) is an active-site residue. Catalysis depends on residues histidine 195 and glutamate 197.

Part of the FGAM synthase complex composed of 1 PurL, 1 PurQ and 2 PurS subunits.

The protein resides in the cytoplasm. The enzyme catalyses N(2)-formyl-N(1)-(5-phospho-beta-D-ribosyl)glycinamide + L-glutamine + ATP + H2O = 2-formamido-N(1)-(5-O-phospho-beta-D-ribosyl)acetamidine + L-glutamate + ADP + phosphate + H(+). The catalysed reaction is L-glutamine + H2O = L-glutamate + NH4(+). Its pathway is purine metabolism; IMP biosynthesis via de novo pathway; 5-amino-1-(5-phospho-D-ribosyl)imidazole from N(2)-formyl-N(1)-(5-phospho-D-ribosyl)glycinamide: step 1/2. Its function is as follows. Part of the phosphoribosylformylglycinamidine synthase complex involved in the purines biosynthetic pathway. Catalyzes the ATP-dependent conversion of formylglycinamide ribonucleotide (FGAR) and glutamine to yield formylglycinamidine ribonucleotide (FGAM) and glutamate. The FGAM synthase complex is composed of three subunits. PurQ produces an ammonia molecule by converting glutamine to glutamate. PurL transfers the ammonia molecule to FGAR to form FGAM in an ATP-dependent manner. PurS interacts with PurQ and PurL and is thought to assist in the transfer of the ammonia molecule from PurQ to PurL. In Lactobacillus acidophilus (strain ATCC 700396 / NCK56 / N2 / NCFM), this protein is Phosphoribosylformylglycinamidine synthase subunit PurQ.